The sequence spans 164 residues: Kunitz-type trypsin inhibitor BrTI (164 aa).

The protein belongs to the leguminous Kunitz-type inhibitor family.

Inhibitor of trypsin and human plasma kallikrein with a Ki of 2.9 nM and 14.0 nM, respectively. Does not inhibit chymotrypsin, porcine pancreatic elastas, human neutrophil elastase, coagulation factor Xa, human thrombin, porcine pancreatic kallikrein or plasmin. This chain is Kunitz-type trypsin inhibitor BrTI, found in Bauhinia rufa (Orchid tree).